The following is a 538-amino-acid chain: Chaperonin GroEL (538 aa).

ATP is bound by residues 29 to 32, 86 to 90, glycine 413, 476 to 478, and aspartate 492; these read TIGP, DGTTT, and NAA.

This sequence belongs to the chaperonin (HSP60) family. In terms of assembly, forms a cylinder of 14 subunits composed of two heptameric rings stacked back-to-back. Interacts with the co-chaperonin GroES.

Its subcellular location is the cytoplasm. The enzyme catalyses ATP + H2O + a folded polypeptide = ADP + phosphate + an unfolded polypeptide.. Together with its co-chaperonin GroES, plays an essential role in assisting protein folding. The GroEL-GroES system forms a nano-cage that allows encapsulation of the non-native substrate proteins and provides a physical environment optimized to promote and accelerate protein folding. The chain is Chaperonin GroEL from Staphylococcus aureus (strain USA300).